Reading from the N-terminus, the 284-residue chain is MSNEISRNWPAPAKLNLFLHINGRRADGYHELQTLFQFIDCCDQLDFRVTQTPELILHSNMSAVVADSDNLILRAAKSLQQATSYPGGAEIWLEKRLPMGGGLGGGSSDAATTLVALNQLWNTQLSNDELAAIGLKLGADIPVFIRGFAAFAEGVGERLQAVTPTEFWYLVIAPDAHVSTAAVFQDPLLPRNTPKLGIDTLMSQPWANDCQDLVVSKYPQVAKALGWLLEYAPSRMTGTGACVFGEFSSQQQALAALAKLPSDMQGFVAKGMNISPLIVRLTHP.

Residue Lys14 is part of the active site. Pro98–Ser108 contributes to the ATP binding site. Asp140 is an active-site residue.

The protein belongs to the GHMP kinase family. IspE subfamily.

The catalysed reaction is 4-CDP-2-C-methyl-D-erythritol + ATP = 4-CDP-2-C-methyl-D-erythritol 2-phosphate + ADP + H(+). It functions in the pathway isoprenoid biosynthesis; isopentenyl diphosphate biosynthesis via DXP pathway; isopentenyl diphosphate from 1-deoxy-D-xylulose 5-phosphate: step 3/6. In terms of biological role, catalyzes the phosphorylation of the position 2 hydroxy group of 4-diphosphocytidyl-2C-methyl-D-erythritol. In Shewanella sp. (strain ANA-3), this protein is 4-diphosphocytidyl-2-C-methyl-D-erythritol kinase.